The primary structure comprises 337 residues: GTPase Obg (337 aa).

Residues 1–161 (MNLTDNAVIF…FKIKLDFVFL (161 aa)) form the Obg domain. One can recognise an OBG-type G domain in the interval 162–333 (ADVGLFGYSN…LINKILLFLE (172 aa)). GTP is bound by residues 168–175 (GYSNTGRS), 193–197 (FTTLF), 214–217 (DIPS), 282–285 (NKTD), and 314–316 (SLN). Mg(2+) contacts are provided by S175 and T195.

It belongs to the TRAFAC class OBG-HflX-like GTPase superfamily. OBG GTPase family. In terms of assembly, monomer. The cofactor is Mg(2+).

The protein localises to the cytoplasm. Functionally, an essential GTPase which binds GTP, GDP and possibly (p)ppGpp with moderate affinity, with high nucleotide exchange rates and a fairly low GTP hydrolysis rate. Plays a role in control of the cell cycle, stress response, ribosome biogenesis and in those bacteria that undergo differentiation, in morphogenesis control. The polypeptide is GTPase Obg (Wigglesworthia glossinidia brevipalpis).